The following is a 258-amino-acid chain: Isoprenyl transferase (258 aa).

Asp38 is an active-site residue. Asp38 contacts Mg(2+). Residues 39–42 (GNGR), Trp43, Arg51, His55, and 83–85 (STE) each bind substrate. Asn86 (proton acceptor) is an active-site residue. Residues Trp87, Arg89, Arg206, and 212-214 (RIS) contribute to the substrate site. Glu225 serves as a coordination point for Mg(2+).

This sequence belongs to the UPP synthase family. Homodimer. The cofactor is Mg(2+).

Catalyzes the condensation of isopentenyl diphosphate (IPP) with allylic pyrophosphates generating different type of terpenoids. This Bacillus cereus (strain ATCC 10987 / NRS 248) protein is Isoprenyl transferase.